Consider the following 489-residue polypeptide: Cytochrome P450 monooxygenase trt6 (489 aa).

Residues 10-30 traverse the membrane as a helical segment; it reads SLWSFGLWILVILSPVLFFAS. 2 N-linked (GlcNAc...) asparagine glycosylation sites follow: Asn364 and Asn407. Residue Cys430 coordinates heme.

Belongs to the cytochrome P450 family. Heme is required as a cofactor.

It is found in the membrane. The protein operates within secondary metabolite biosynthesis; terpenoid biosynthesis. In terms of biological role, cytochrome P450 monooxygenase; part of the gene cluster that mediates the biosynthesis of terretonin, a fungal meroterpenoid that acts as a mycotoxin. The first step of the pathway is the synthesis of 3,5-dimethylorsellinic acid (DMOA) by the polyketide synthase trt4. DMOA is then prenylated into farnesyl-DMOA by the polyprenyl transferase trt2. Methylation by the methyltransferase trt5 then leads to farnesyl-DMOA methyl ester which is further subject to epoxidation by the FAD-dependent monooxygenase trt8 to yield epoxyfarnesyl-DMOA methyl ester. Cyclization of epoxyfarnesyl-DMOA methyl ester by the terpene cyclase trt1 leads to a tetracycle intermediate which is in turn converted to preterretonin. Dehydrogenase trt9 comes next to transform preterretonin to preterrenoid. The FAD-dependent monooxygenase trt3 is then required for the C-hydroxylation at C16 of preterrenoid to yield terrenoid. The cytochrome P450 trt6 catalyzes three successive oxidations to transform terrenoid into an unstable intermediate, which then undergoes the D-ring expansion and unusual rearrangement of the methoxy group to afford the core skeleton of terretonin. Trt14 catalyzes the D-ring expansion of terretonin involving intramolecular methoxy rearrangement as well as the hydrolysis of the expanded D-ring and the methyl ester moiety. Finally, the nonheme iron-dependent dioxygenase trt7 accomplishes the last two oxidation reactions steps to complete the biosynthesis of terretonin. Terretonin C is produced via spontaneous decarboxylation of the terretonin precursor. Another shunt product of the terretonin biosynthesis is dihydrofarnesyl-DMOA, derived from epoxyfarnesyl-DMOA through hydrolysis of the epoxide. This Aspergillus terreus (strain NIH 2624 / FGSC A1156) protein is Cytochrome P450 monooxygenase trt6.